The sequence spans 290 residues: Undecaprenyl-diphosphatase (290 aa).

The next 8 membrane-spanning stretches (helical) occupy residues 5 to 25 (IGIF…YFPI), 44 to 64 (GTAY…TYFY), 88 to 108 (VRLF…GLAL), 122 to 142 (LSVI…SESL), 152 to 172 (IRVI…VPGV), 195 to 215 (FSFL…LKVL), 226 to 246 (PIVA…AWLL), and 255 to 275 (LVFV…LAAG).

The protein belongs to the UppP family.

It is found in the cell inner membrane. It catalyses the reaction di-trans,octa-cis-undecaprenyl diphosphate + H2O = di-trans,octa-cis-undecaprenyl phosphate + phosphate + H(+). In terms of biological role, catalyzes the dephosphorylation of undecaprenyl diphosphate (UPP). Confers resistance to bacitracin. The sequence is that of Undecaprenyl-diphosphatase from Gloeobacter violaceus (strain ATCC 29082 / PCC 7421).